We begin with the raw amino-acid sequence, 366 residues long: 3-dehydroquinate synthase (366 aa).

NAD(+) contacts are provided by residues Asp-73 to Lys-78, Gly-107 to Asp-111, Thr-131 to Thr-132, Lys-144, and Lys-153. Glu-186, His-249, and His-266 together coordinate Zn(2+).

It belongs to the sugar phosphate cyclases superfamily. Dehydroquinate synthase family. The cofactor is Co(2+). Zn(2+) is required as a cofactor. Requires NAD(+) as cofactor.

Its subcellular location is the cytoplasm. It catalyses the reaction 7-phospho-2-dehydro-3-deoxy-D-arabino-heptonate = 3-dehydroquinate + phosphate. Its pathway is metabolic intermediate biosynthesis; chorismate biosynthesis; chorismate from D-erythrose 4-phosphate and phosphoenolpyruvate: step 2/7. Functionally, catalyzes the conversion of 3-deoxy-D-arabino-heptulosonate 7-phosphate (DAHP) to dehydroquinate (DHQ). The sequence is that of 3-dehydroquinate synthase from Koribacter versatilis (strain Ellin345).